We begin with the raw amino-acid sequence, 404 residues long: O-antigen ligase (404 aa).

11 helical membrane passes run 16–32 (IWNKALVFLFVATYFLD), 39–55 (HLIIILMVITAIYQVSR), 67–84 (SVFYSVAVLSLILVYSIL), 96–115 (FENTVLEGFLLYTLLIPVLL), 127–147 (VLFSFLTSLGLRCLAESILYI), 168–183 (SMVFLFPALLNIWLFR), 189–221 (LVFLVLSAIYLFFILGTLSRGAWLAVLIVGVLW), 228–246 (WKLIGVGAILLAIIGALVI), 324–343 (ILYIWFSAGILGLASLVYLY), 363–379 (YNAHLLLFLSFVGFYIV), and 385–401 (QVDIAQIGIITGFLLAL).

The protein belongs to the O-antigen ligase family.

Its subcellular location is the cell inner membrane. The enzyme catalyses a lipid-linked O antigen + a lipid A-core oligosaccharide = a lipopolysaccharide + a polyisoprenyl diphosphate.. It participates in bacterial outer membrane biogenesis; lipopolysaccharide biosynthesis. Transferase involved in the biosynthesis of the lipopolysaccharide (LPS). Catalyzes the transfer of a polymerized O-antigen molecule from its polyprenyl diphosphate membrane anchor to a terminal sugar of the lipid A-core oligosaccharide, finalizing the biosynthesis of the lipopolysaccharide. May also be involved in a feedback mechanism to regulate O-unit synthesis, based on the availability of O units on the periplasmic face of the membrane. The sequence is that of O-antigen ligase from Salmonella typhimurium (strain LT2 / SGSC1412 / ATCC 700720).